The primary structure comprises 690 residues: MAPWPELGDAQPNPDKYLEGAAGQQPTAPDKSKETNKTDNTEAPVTKIELLPSYSTATLIDEPTEVDDPWNLPTLQDSGIKWSERDTKGKILCFFQGIGRLILLLGFLYFFVCSLDILSSAFQLVGGKMAGQFFSNSSIMSNPLLGLVIGVLVTVLVQSSSTSTSIVVSMVSSSLLTVRAAIPIIMGANIGTSITNTIVALMQVGDRSEFRRAFAGATVHDFFNWLSVLVLLPVEVATHYLEIITQLIVESFHFKNGEDAPDLLKVITKPFTKLIVQLDKKVISQIAMNDEKAKNKSLVKIWCKTFTNKTQINVTVPSTANCTSPSLCWTDGIQNWTMKNVTYKENIAKCQHIFVNFHLPDLAVGTILLILSLLVLCGCLIMIVKILGSVLKGQVATVIKKTINTDFPFPFAWLTGYLAILVGAGMTFIVQSSSVFTSALTPLIGIGVITIERAYPLTLGSNIGTTTTAILAALASPGNALRSSLQIALCHFFFNISGILLWYPIPFTRLPIRMAKGLGNISAKYRWFAVFYLIIFFFLIPLTVFGLSLAGWRVLVGVGVPVVFIIILVLCLRLLQSRCPRVLPKKLQNWNFLPLWMRSLKPWDAVVSKFTGCFQMRCCCCCRVCCRACCLLCDCPKCCRCSKCCEDLEEAQEGQDVPVKAPETFDNITISREAQGEVPASDSKTECTAL.

Residues Met-1 to Glu-42 are disordered. The Cytoplasmic portion of the chain corresponds to Met-1 to Arg-100. Residues Asp-30–Asn-40 are compositionally biased toward basic and acidic residues. Residues Leu-101–Ala-121 traverse the membrane as a helical segment. At Phe-122–Ser-135 the chain is on the extracellular side. A helical transmembrane segment spans residues Asn-136–Leu-156. At Val-157–Arg-212 the chain is on the cytoplasmic side. A helical membrane pass occupies residues Ala-213–Pro-233. Residues Val-234–Leu-362 are Extracellular-facing. Asn-295, Asn-308, Asn-313, Asn-321, and Asn-340 each carry an N-linked (GlcNAc...) asparagine glycan. The cysteines at positions 303 and 350 are disulfide-linked. A helical transmembrane segment spans residues Ala-363–Ile-383. Residues Val-384–Phe-407 lie on the Cytoplasmic side of the membrane. Residues Pro-408–Phe-428 traverse the membrane as a helical segment. Over Ile-429–Leu-485 the chain is Extracellular. The chain crosses the membrane as a helical span at residues Gln-486–Pro-506. At Phe-507–Tyr-525 the chain is on the cytoplasmic side. The chain crosses the membrane as a helical span at residues Arg-526–Gly-546. Residues Leu-547–Trp-552 lie on the Extracellular side of the membrane. The chain crosses the membrane as a helical span at residues Arg-553–Arg-573. Topologically, residues Leu-574 to Ala-689 are cytoplasmic.

The protein belongs to the SLC34A transporter family. As to expression, highly expressed in lung. Also detected in pancreas, kidney, small intestine, ovary, testis, prostate and mammary gland. In lung, it is found in alveolar type II cells but not in bronchiolar epithelium.

The protein resides in the apical cell membrane. It catalyses the reaction 3 Na(+)(out) + phosphate(out) = 3 Na(+)(in) + phosphate(in). Involved in actively transporting phosphate into cells via Na(+) cotransport. This is Sodium-dependent phosphate transport protein 2B (SLC34A2) from Homo sapiens (Human).